A 637-amino-acid chain; its full sequence is DNA gyrase subunit B (637 aa).

The Toprim domain maps to 421–535 (SEIYIVEGDS…HGYVYIAQPP (115 aa)). Glutamate 427, aspartate 500, and aspartate 502 together coordinate Mg(2+).

Belongs to the type II topoisomerase GyrB family. As to quaternary structure, heterotetramer, composed of two GyrA and two GyrB chains. In the heterotetramer, GyrA contains the active site tyrosine that forms a transient covalent intermediate with DNA, while GyrB binds cofactors and catalyzes ATP hydrolysis. The cofactor is Mg(2+). Mn(2+) is required as a cofactor. It depends on Ca(2+) as a cofactor.

It is found in the cytoplasm. The enzyme catalyses ATP-dependent breakage, passage and rejoining of double-stranded DNA.. Functionally, a type II topoisomerase that negatively supercoils closed circular double-stranded (ds) DNA in an ATP-dependent manner to modulate DNA topology and maintain chromosomes in an underwound state. Negative supercoiling favors strand separation, and DNA replication, transcription, recombination and repair, all of which involve strand separation. Also able to catalyze the interconversion of other topological isomers of dsDNA rings, including catenanes and knotted rings. Type II topoisomerases break and join 2 DNA strands simultaneously in an ATP-dependent manner. The chain is DNA gyrase subunit B from Halalkalibacterium halodurans (strain ATCC BAA-125 / DSM 18197 / FERM 7344 / JCM 9153 / C-125) (Bacillus halodurans).